The chain runs to 92 residues: Large ribosomal subunit protein eL31 (92 aa).

The protein belongs to the eukaryotic ribosomal protein eL31 family.

The chain is Large ribosomal subunit protein eL31 from Halobacterium salinarum (strain ATCC 29341 / DSM 671 / R1).